Here is a 484-residue protein sequence, read N- to C-terminus: Probable protein disulfide-isomerase ER-60 (484 aa).

The first 14 residues, 1 to 14, serve as a signal peptide directing secretion; it reads MRWLLSCLFLVAFA. 2 consecutive Thioredoxin domains span residues 15-125 and 338-467; these read SCSK…SRAG and FEDG…REAT. Catalysis depends on nucleophile residues cysteine 46, cysteine 49, cysteine 388, and cysteine 391. Intrachain disulfides connect cysteine 46–cysteine 49 and cysteine 388–cysteine 391. Residues 481–484 carry the Prevents secretion from ER motif; it reads KSEL.

This sequence belongs to the protein disulfide isomerase family.

It is found in the endoplasmic reticulum lumen. It catalyses the reaction Catalyzes the rearrangement of -S-S- bonds in proteins.. The protein is Probable protein disulfide-isomerase ER-60 of Schistosoma mansoni (Blood fluke).